The sequence spans 207 residues: Uracil phosphoribosyltransferase (207 aa).

5-phospho-alpha-D-ribose 1-diphosphate contacts are provided by residues Arg77, Arg102, and 129-137 (DPMLATGGS). Uracil contacts are provided by residues Ile192 and 197–199 (GDA). Asp198 is a 5-phospho-alpha-D-ribose 1-diphosphate binding site.

Belongs to the UPRTase family. Mg(2+) is required as a cofactor.

It catalyses the reaction UMP + diphosphate = 5-phospho-alpha-D-ribose 1-diphosphate + uracil. It participates in pyrimidine metabolism; UMP biosynthesis via salvage pathway; UMP from uracil: step 1/1. With respect to regulation, allosterically activated by GTP. Its function is as follows. Catalyzes the conversion of uracil and 5-phospho-alpha-D-ribose 1-diphosphate (PRPP) to UMP and diphosphate. The protein is Uracil phosphoribosyltransferase of Nocardia farcinica (strain IFM 10152).